The primary structure comprises 325 residues: DNA-directed RNA polymerase subunit alpha (325 aa).

The alpha N-terminal domain (alpha-NTD) stretch occupies residues 1-231 (MQTSLLKPKI…DQLSVFAALE (231 aa)). An alpha C-terminal domain (alpha-CTD) region spans residues 246–325 (IDPILLRPVD…ENWPPAGLDK (80 aa)).

The protein belongs to the RNA polymerase alpha chain family. In terms of assembly, homodimer. The RNAP catalytic core consists of 2 alpha, 1 beta, 1 beta' and 1 omega subunit. When a sigma factor is associated with the core the holoenzyme is formed, which can initiate transcription.

The enzyme catalyses RNA(n) + a ribonucleoside 5'-triphosphate = RNA(n+1) + diphosphate. Functionally, DNA-dependent RNA polymerase catalyzes the transcription of DNA into RNA using the four ribonucleoside triphosphates as substrates. This Paraburkholderia phytofirmans (strain DSM 17436 / LMG 22146 / PsJN) (Burkholderia phytofirmans) protein is DNA-directed RNA polymerase subunit alpha.